Here is an 830-residue protein sequence, read N- to C-terminus: Serine/threonine-protein kinase atg1 (830 aa).

Positions 14–307 (YVIRSEIGRG…YDGFFSSIVV (294 aa)) constitute a Protein kinase domain. ATP is bound by residues 20–28 (IGRGSFAIV) and Lys43. Residue Asp157 is the Proton acceptor of the active site. A Phosphoserine modification is found at Ser346. Positions 448-468 (TQLSNESLTHEQSINGNSPSP) are enriched in polar residues. The disordered stretch occupies residues 448-480 (TQLSNESLTHEQSINGNSPSPNEGVFQGSFSPE).

This sequence belongs to the protein kinase superfamily. Ser/Thr protein kinase family. APG1/unc-51/ULK1 subfamily. Homodimer. Component of the atg1 kinase complex composed of at least atg1, atg13, atg17 and atg101. Interacts directly with atg13. Post-translationally, phosphorylated. Dephosphorylated under depletion of nitrogen.

It carries out the reaction L-seryl-[protein] + ATP = O-phospho-L-seryl-[protein] + ADP + H(+). The enzyme catalyses L-threonyl-[protein] + ATP = O-phospho-L-threonyl-[protein] + ADP + H(+). Serine/threonine protein kinase involved in the cytoplasm to vacuole transport (Cvt) and found to be essential in autophagy, where it is required for the formation of autophagosomes. Involved in the clearance of protein aggregates which cannot be efficiently cleared by the proteasome. Required for selective autophagic degradation of the nucleus (nucleophagy) as well as for mitophagy which contributes to regulate mitochondrial quantity and quality by eliminating the mitochondria to a basal level to fulfill cellular energy requirements and preventing excess ROS production. Also involved in endoplasmic reticulum-specific autophagic process, in selective removal of ER-associated degradation (ERAD) substrates. Plays a key role in ATG9 and ATG23 cycling through the pre-autophagosomal structure and is necessary to promote ATG18 binding to ATG9 through phosphorylation of ATG9. Catalyzes phosphorylation of ATG4, decreasing the interaction between ATG4 and ATG8 and impairing deconjugation of PE-conjugated forms of ATG8. Autophagy functions to supply nitrogen and is activated when cells cannot access exogenous nitrogen, thus ensuring that they can adapt and subsequently propagate. Finally, atg13 is also required for glycogen storage during stationary phase and has a role in meiosis and sporulation. The sequence is that of Serine/threonine-protein kinase atg1 from Schizosaccharomyces pombe (strain 972 / ATCC 24843) (Fission yeast).